The primary structure comprises 296 residues: Cytidine deaminase (296 aa).

CMP/dCMP-type deaminase domains follow at residues 52–167 (SPVE…YLPD) and 191–296 (QGHD…YISL). 93-95 (NQE) is a substrate binding site. Histidine 106 contacts Zn(2+). Glutamate 108 functions as the Proton donor in the catalytic mechanism. Residues cysteine 133 and cysteine 136 each coordinate Zn(2+).

This sequence belongs to the cytidine and deoxycytidylate deaminase family. Homodimer. The cofactor is Zn(2+).

The catalysed reaction is cytidine + H2O + H(+) = uridine + NH4(+). It catalyses the reaction 2'-deoxycytidine + H2O + H(+) = 2'-deoxyuridine + NH4(+). Its function is as follows. This enzyme scavenges exogenous and endogenous cytidine and 2'-deoxycytidine for UMP synthesis. The protein is Cytidine deaminase of Mannheimia succiniciproducens (strain KCTC 0769BP / MBEL55E).